The primary structure comprises 276 residues: Short-chain dehydrogenase anuF (276 aa).

NADP(+) is bound by residues I18, D68, K130, Y176, K180, V209, and T211. Catalysis depends on Y176, which acts as the Proton acceptor. Y176 acts as the Proton donor in catalysis. K180 (lowers pKa of active site Tyr) is an active-site residue.

The protein belongs to the short-chain dehydrogenases/reductases (SDR) family.

It catalyses the reaction (2R,9S)-annullatin H + A = (2R)-annullatin F + AH2. Functionally, cytochrome P450 monooxygenase; part of the gene cluster that mediates the biosynthesis of annullatin D, an alkylated aromatic polyketide with a fused dihydrobenzofuran lactone ring system that exhibits potent agonistic activities toward the cannabinoid receptors. Within the pathway, anuF is involved in the formation of (2R)-annullatin F from the diastereomer of (2S,9S)-annullatin H (compound 12). The annullatin backbone 2-hydroxymethyl-3-pentylphenol is assembled from one acetyl-CoA starter unit and 5 malonyl-CoA elongation units by cooperation of the highly reducing polyketide synthase anuA, the short-chain dehydrogenase anuB and the oxidoreductase anuC, before being hydroxylated at the C-5 alkyl chain by the cytochrome P450 monooxygenase anuE to form (8S)-annullatin E. The prenyltransferase anuH subsequently installs one isoprenyl group at the benzene ring to form (8S)-annullatin J. Enzymatic or nonenzymatic dihydro-benzofuran ring formation between the prenyl and the phenolic hydroxyl groups in (8S)-annullatin J results in two diastereomers (2S,9S)-annullatin H and compound 12. The intermediate (2S,9S)-annullatin H is then converted to (2S,9S)-annullatin D by the FAD-linked oxidoreductase anuG-catalyzed five-member lactone ring formation. The isomer 12 acts as a substrate for the short-chain dehydrogenase anuF and is oxidized to (2R)-annullatin F, which is subsequently acetylated by an acetyltransferase leading to (2R)-annullatin G formation. The remaining enzymes identified within the cluster, anuD, anuI and anuJ, seem not to be involved in annullatin biosynthesis. The protein is Short-chain dehydrogenase anuF of Penicillium roqueforti (strain FM164).